The chain runs to 317 residues: tRNA dimethylallyltransferase (317 aa).

Residue 14–21 (GPTAVGKT) participates in ATP binding. 16-21 (TAVGKT) serves as a coordination point for substrate. The interval 39-42 (DSMQ) is interaction with substrate tRNA.

Belongs to the IPP transferase family. Monomer. Mg(2+) is required as a cofactor.

The catalysed reaction is adenosine(37) in tRNA + dimethylallyl diphosphate = N(6)-dimethylallyladenosine(37) in tRNA + diphosphate. Functionally, catalyzes the transfer of a dimethylallyl group onto the adenine at position 37 in tRNAs that read codons beginning with uridine, leading to the formation of N6-(dimethylallyl)adenosine (i(6)A). The chain is tRNA dimethylallyltransferase from Bacillus cereus (strain AH820).